The primary structure comprises 628 residues: Chaperone protein DnaK (628 aa).

A Phosphothreonine; by autocatalysis modification is found at threonine 197. The segment covering 595 to 604 (AEAMYKKEQG) has biased composition (basic and acidic residues). A disordered region spans residues 595-628 (AEAMYKKEQGEQAGAQPNQKAKKDDDDVIDAEVE).

It belongs to the heat shock protein 70 family.

Acts as a chaperone. The chain is Chaperone protein DnaK from Aliarcobacter butzleri (strain RM4018) (Arcobacter butzleri).